A 339-amino-acid chain; its full sequence is Ferredoxin--NADP reductase (339 aa).

D32, Q40, Y45, V85, F120, D287, and T327 together coordinate FAD.

Belongs to the ferredoxin--NADP reductase type 2 family. In terms of assembly, homodimer. Requires FAD as cofactor.

The enzyme catalyses 2 reduced [2Fe-2S]-[ferredoxin] + NADP(+) + H(+) = 2 oxidized [2Fe-2S]-[ferredoxin] + NADPH. The chain is Ferredoxin--NADP reductase from Wolbachia sp. subsp. Brugia malayi (strain TRS).